Here is a 218-residue protein sequence, read N- to C-terminus: MNQSSLLAEFGDPITRVENALQALREGRGVLLLDDEDRENEGDIIYAVESLTTAQMALMIRECSGIVCLCLTEAQADRLALPPMVVNNNSANQTAFTVSIEAKHGVTTGVSAQDRVTTIKTAANPQAKPEDLARPGHVFPLRARAGGVLARRGHTEGTVDLMQMAGLQPAGVLCELTNPDGSMAKTPEIIEFGKLHNMPVLTIEDMVQYRIQFDLKLA.

Residues 38–39 (RE), D43, 151–155 (RRGHT), and E175 each bind D-ribulose 5-phosphate. E39 is a Mg(2+) binding site. Residue H154 participates in Mg(2+) binding.

This sequence belongs to the DHBP synthase family. Homodimer. The cofactor is Mg(2+). Requires Mn(2+) as cofactor.

The enzyme catalyses D-ribulose 5-phosphate = (2S)-2-hydroxy-3-oxobutyl phosphate + formate + H(+). It participates in cofactor biosynthesis; riboflavin biosynthesis; 2-hydroxy-3-oxobutyl phosphate from D-ribulose 5-phosphate: step 1/1. Its function is as follows. Catalyzes the conversion of D-ribulose 5-phosphate to formate and 3,4-dihydroxy-2-butanone 4-phosphate. The sequence is that of 3,4-dihydroxy-2-butanone 4-phosphate synthase from Vibrio cholerae serotype O1 (strain M66-2).